The chain runs to 327 residues: Ventral anterior homeobox 1 (327 aa).

Over residues 1 to 34 (MFGKQDKMDVRCSTETEANRVSKNGHKEGKDSKG) the composition is skewed to basic and acidic residues. The tract at residues 1–41 (MFGKQDKMDVRCSTETEANRVSKNGHKEGKDSKGAEGNIST) is disordered. The segment at residues 99 to 158 (PKRTRTSFTAEQLYRLEMEFQRCQYVVGRERTELARQLNLSETQVKVWFQNRRTKQKKDQ) is a DNA-binding region (homeobox). Residues 230 to 245 (APAGGSPHPPSAGTAA) are compositionally biased toward low complexity. The disordered stretch occupies residues 230-249 (APAGGSPHPPSAGTAAGPPP).

This sequence belongs to the EMX homeobox family.

The protein localises to the nucleus. In terms of biological role, transcription factor that plays a role in establishing dorsal-ventral polarity in the neural retina. This chain is Ventral anterior homeobox 1 (VAX1), found in Gallus gallus (Chicken).